Reading from the N-terminus, the 533-residue chain is GMP synthase [glutamine-hydrolyzing] (533 aa).

Positions 25–215 (SIVIFDFGSQ…VFNICKCHAN (191 aa)) constitute a Glutamine amidotransferase type-1 domain. Residue Cys102 is the Nucleophile of the active site. Catalysis depends on residues His189 and Glu191. In terms of domain architecture, GMPS ATP-PPase spans 216 to 408 (WTMGNYIQES…LGLPDEMIWR (193 aa)). 243 to 249 (SGGVDSA) contributes to the ATP binding site.

As to quaternary structure, homodimer.

The catalysed reaction is XMP + L-glutamine + ATP + H2O = GMP + L-glutamate + AMP + diphosphate + 2 H(+). Its pathway is purine metabolism; GMP biosynthesis; GMP from XMP (L-Gln route): step 1/1. Functionally, catalyzes the synthesis of GMP from XMP. This chain is GMP synthase [glutamine-hydrolyzing], found in Dehalococcoides mccartyi (strain ATCC BAA-2266 / KCTC 15142 / 195) (Dehalococcoides ethenogenes (strain 195)).